The chain runs to 236 residues: Orotidine 5'-phosphate decarboxylase (236 aa).

Residues aspartate 12, lysine 34, 60–69 (DLKLHDIPHT), threonine 123, arginine 184, glutamine 193, glycine 213, and arginine 214 contribute to the substrate site. The Proton donor role is filled by lysine 62.

This sequence belongs to the OMP decarboxylase family. Type 1 subfamily. Homodimer.

It catalyses the reaction orotidine 5'-phosphate + H(+) = UMP + CO2. Its pathway is pyrimidine metabolism; UMP biosynthesis via de novo pathway; UMP from orotate: step 2/2. Functionally, catalyzes the decarboxylation of orotidine 5'-monophosphate (OMP) to uridine 5'-monophosphate (UMP). This Gluconobacter oxydans (strain 621H) (Gluconobacter suboxydans) protein is Orotidine 5'-phosphate decarboxylase.